The sequence spans 403 residues: Tryptophan synthase beta chain (403 aa).

K90 bears the N6-(pyridoxal phosphate)lysine mark.

The protein belongs to the TrpB family. Tetramer of two alpha and two beta chains. It depends on pyridoxal 5'-phosphate as a cofactor.

The enzyme catalyses (1S,2R)-1-C-(indol-3-yl)glycerol 3-phosphate + L-serine = D-glyceraldehyde 3-phosphate + L-tryptophan + H2O. It functions in the pathway amino-acid biosynthesis; L-tryptophan biosynthesis; L-tryptophan from chorismate: step 5/5. In terms of biological role, the beta subunit is responsible for the synthesis of L-tryptophan from indole and L-serine. In Leifsonia xyli subsp. xyli (strain CTCB07), this protein is Tryptophan synthase beta chain.